The following is a 244-amino-acid chain: MSLPSCVPGYRRILLKLSGEVLMGEQQFGIDTDYVARVAQEVKDARDSGLEICLVIGGGNIFRGMAGAAKGMDRAQADYMGMLATVMNALAMQSALEQLGVPTRVQSAIEMDKVCEPVIRRRAERHLEKGRIVIFAAGVGAPYFTTDSGAALRAAEMKCDALLKGTSVDGVYNADPKKDPAAKRYETVDYDTVLADNLKVMDASAVALCRDNNIPIVVFSIRERGNLARVLAGEGTQTTVKKEA.

16–19 (KLSG) contacts ATP. Glycine 58 is a binding site for UMP. ATP contacts are provided by glycine 59 and arginine 63. Residues aspartate 78 and 139–146 (VGAPYFTT) contribute to the UMP site. The ATP site is built by threonine 166, tyrosine 172, and aspartate 175.

It belongs to the UMP kinase family. Homohexamer.

The protein localises to the cytoplasm. The enzyme catalyses UMP + ATP = UDP + ADP. It functions in the pathway pyrimidine metabolism; CTP biosynthesis via de novo pathway; UDP from UMP (UMPK route): step 1/1. With respect to regulation, inhibited by UTP. Functionally, catalyzes the reversible phosphorylation of UMP to UDP. The chain is Uridylate kinase from Novosphingobium aromaticivorans (strain ATCC 700278 / DSM 12444 / CCUG 56034 / CIP 105152 / NBRC 16084 / F199).